We begin with the raw amino-acid sequence, 406 residues long: Phosphopentomutase (406 aa).

6 residues coordinate Mn(2+): Asp10, Asp305, His310, Asp346, His347, and His358.

It belongs to the phosphopentomutase family. Mn(2+) serves as cofactor.

It localises to the cytoplasm. It carries out the reaction 2-deoxy-alpha-D-ribose 1-phosphate = 2-deoxy-D-ribose 5-phosphate. The enzyme catalyses alpha-D-ribose 1-phosphate = D-ribose 5-phosphate. Its pathway is carbohydrate degradation; 2-deoxy-D-ribose 1-phosphate degradation; D-glyceraldehyde 3-phosphate and acetaldehyde from 2-deoxy-alpha-D-ribose 1-phosphate: step 1/2. Functionally, isomerase that catalyzes the conversion of deoxy-ribose 1-phosphate (dRib-1-P) and ribose 1-phosphate (Rib-1-P) to deoxy-ribose 5-phosphate (dRib-5-P) and ribose 5-phosphate (Rib-5-P), respectively. This chain is Phosphopentomutase, found in Rhizobium johnstonii (strain DSM 114642 / LMG 32736 / 3841) (Rhizobium leguminosarum bv. viciae).